The primary structure comprises 294 residues: Nucleotide-binding protein CA_C0511 (294 aa).

ATP is bound at residue 8 to 15 (GLSGAGKT). 59–62 (DIRG) is a binding site for GTP.

The protein belongs to the RapZ-like family.

Its function is as follows. Displays ATPase and GTPase activities. The sequence is that of Nucleotide-binding protein CA_C0511 from Clostridium acetobutylicum (strain ATCC 824 / DSM 792 / JCM 1419 / IAM 19013 / LMG 5710 / NBRC 13948 / NRRL B-527 / VKM B-1787 / 2291 / W).